Here is a 654-residue protein sequence, read N- to C-terminus: Peptide-N(4)-(N-acetyl-beta-glucosaminyl)asparagine amidase (654 aa).

Ala2 carries the post-translational modification N-acetylalanine. One can recognise a PUB domain in the interval 30-91 (EASKLLLTYA…EGETHLIFPK (62 aa)). The segment covering 112-123 (RLDGSNKSHKVE) has biased composition (basic and acidic residues). Positions 112 to 167 (RLDGSNKSHKVESSQQPAASTQLPTTPSSNPSGLNQHTRNRQGQSPDPPSASTVTP) are disordered. Residues 124–167 (SSQQPAASTQLPTTPSSNPSGLNQHTRNRQGQSPDPPSASTVTP) are compositionally biased toward polar residues. At Thr137 the chain carries Phosphothreonine. 4 residues coordinate Zn(2+): Cys250, Cys253, Cys283, and Cys286. Cys309 functions as the Nucleophile in the catalytic mechanism. Catalysis depends on residues His336 and Asp353. In terms of domain architecture, PAW spans 454–654 (ELGGRISGSV…LEIIIKFSDL (201 aa)).

This sequence belongs to the transglutaminase-like superfamily. PNGase family. Component of a complex required to couple retrotranslocation, ubiquitination and deglycosylation composed of NGLY1, SAKS1, AMFR, VCP and RAD23B. Interacts with the proteasome components RAD23B and PSMC1. Interacts with directly with VCP. Interacts with DERL1, bringing it close to the endoplasmic reticulum membrane. Interacts with SAKS1. The cofactor is Zn(2+).

Its subcellular location is the cytoplasm. It catalyses the reaction Hydrolysis of an N(4)-(acetyl-beta-D-glucosaminyl)asparagine residue in which the glucosamine residue may be further glycosylated, to yield a (substituted) N-acetyl-beta-D-glucosaminylamine and a peptide containing an aspartate residue.. Inhibited by Z-VAD-fmk, a well-known caspase inhibitor, which inhibits enzyme activity through covalent binding of the carbohydrate to the single Cys-306 residue. Functionally, specifically deglycosylates the denatured form of N-linked glycoproteins in the cytoplasm and assists their proteasome-mediated degradation. Cleaves the beta-aspartyl-glucosamine (GlcNAc) of the glycan and the amide side chain of Asn, converting Asn to Asp. Prefers proteins containing high-mannose over those bearing complex type oligosaccharides. Can recognize misfolded proteins in the endoplasmic reticulum that are exported to the cytosol to be destroyed and deglycosylate them, while it has no activity toward native proteins. Deglycosylation is a prerequisite for subsequent proteasome-mediated degradation of some, but not all, misfolded glycoproteins. This Macaca fascicularis (Crab-eating macaque) protein is Peptide-N(4)-(N-acetyl-beta-glucosaminyl)asparagine amidase (NGLY1).